Here is a 408-residue protein sequence, read N- to C-terminus: Putative F-box protein At1g53550 (408 aa).

An F-box domain is found at 29–74; that stretch reads TCYFDPIPVDLVINILSRLSLECIARCRCVSKLWSSIIRRPNYNQL.

In Arabidopsis thaliana (Mouse-ear cress), this protein is Putative F-box protein At1g53550.